The chain runs to 192 residues: Small ribosomal subunit protein bS16 (192 aa).

Residues 153–192 (AEAKAKAEAEAAAAAEEAAETEETPVEAAAEEAPAAESAE) form a disordered region. Residues 178-192 (VEAAAEEAPAAESAE) show a composition bias toward low complexity.

This sequence belongs to the bacterial ribosomal protein bS16 family.

The chain is Small ribosomal subunit protein bS16 from Porphyromonas gingivalis (strain ATCC BAA-308 / W83).